We begin with the raw amino-acid sequence, 366 residues long: 1-aminocyclopropane-1-carboxylate oxidase homolog 12 (366 aa).

A Fe2OG dioxygenase domain is found at 215–314 (KTLLMICHYY…RISVASFFSS (100 aa)). Histidine 239, aspartate 241, and histidine 295 together coordinate Fe cation. Position 305 (arginine 305) interacts with 2-oxoglutarate.

This sequence belongs to the iron/ascorbate-dependent oxidoreductase family. Fe(2+) serves as cofactor.

This Arabidopsis thaliana (Mouse-ear cress) protein is 1-aminocyclopropane-1-carboxylate oxidase homolog 12.